The primary structure comprises 421 residues: POU domain, class 4, transcription factor 1 (421 aa).

The POU-IV box signature appears at 57 to 66; the sequence is RAEALAAVDI. Disordered stretches follow at residues 94 to 117 and 133 to 200; these read STVPLAHHHHHHHHHQALEPGDLL and GAGA…GLGH. The span at 99 to 108 shows a compositional bias: basic residues; it reads AHHHHHHHHH. Positions 133–186 are enriched in gly residues; that stretch reads GAGAAGGGGGAHDGPGGGGGPGGGGGPGGGGPGGGGGGGGPGGGGGGPGGGLLG. The 78-residue stretch at 262-339 folds into the POU-specific domain; sequence DSDTDPRELE…ILQAWLEEAE (78 aa). The homeobox DNA-binding region spans 357-416; the sequence is KKRKRTSIAAPEKRSLEAYFAVQPRPSSEKIAAIAEKLDLKKNVVRVWFCNQRQKQKRMK.

The protein belongs to the POU transcription factor family. Class-4 subfamily. As to quaternary structure, interacts (via N-terminus) with RIT2; the interaction controls POU4F1 transactivation activity on some neuronal target genes. Isoform 1 interacts with POU4F2 isoform 2; this interaction inhibits both POU4F1 DNA-binding and transcriptional activities. Isoform 1 interacts (C-terminus) with ESR1 (via DNA-binding domain); this interaction decreases the estrogen receptor ESR1 transcriptional activity in a DNA- and ligand 17-beta-estradiol-independent manner. In terms of tissue distribution, expressed in mature osteoclasts (at protein level). Brain, peripheral sensory nervous system and retina. In the adult nervous system, predominates in the medial habenula, superficial gray of the superior colliculus, red nucleus, mesencephalic nucleus of the trigeminal ganglion, nucleus ambiguus, inferior olivary nucleus, and peripheral sensory ganglia.

Its subcellular location is the nucleus. The protein resides in the cytoplasm. Its function is as follows. Multifunctional transcription factor with different regions mediating its different effects. Acts by binding (via its C-terminal domain) to sequences related to the consensus octamer motif 5'-ATGCAAAT-3' in the regulatory regions of its target genes. Regulates the expression of specific genes involved in differentiation and survival within a subset of neuronal lineages. It has been shown that activation of some of these genes requires its N-terminal domain, maybe through a neuronal-specific cofactor. Activates BCL2 expression and protects neuronal cells from apoptosis (via the N-terminal domain). Induces neuronal process outgrowth and the coordinate expression of genes encoding synaptic proteins. Exerts its major developmental effects in somatosensory neurons and in brainstem nuclei involved in motor control. Stimulates the binding affinity of the nuclear estrogene receptor ESR1 to DNA estrogen response element (ERE), and hence modulates ESR1-induced transcriptional activity. May positively regulate POU4F2 and POU4F3. Regulates dorsal root ganglion sensory neuron specification and axonal projection into the spinal cord. Plays a role in TNFSF11-mediated terminal osteoclast differentiation. Negatively regulates its own expression interacting directly with a highly conserved autoregulatory domain surrounding the transcription initiation site. Able to act as transcription factor, cannot regulate the expression of the same subset of genes than isoform 1. Does not have antiapoptotic effect on neuronal cells. The sequence is that of POU domain, class 4, transcription factor 1 (Pou4f1) from Mus musculus (Mouse).